A 256-amino-acid polypeptide reads, in one-letter code: 5-keto-4-deoxy-D-glucarate aldolase (256 aa).

H50 (proton acceptor) is an active-site residue. Q151 contributes to the substrate binding site. E153 is a Mg(2+) binding site. Substrate contacts are provided by S178 and D179. D179 contributes to the Mg(2+) binding site.

This sequence belongs to the HpcH/HpaI aldolase family. KDGluc aldolase subfamily. In terms of assembly, homohexamer; trimer of dimers. It depends on Mg(2+) as a cofactor.

The enzyme catalyses 5-dehydro-4-deoxy-D-glucarate = 2-hydroxy-3-oxopropanoate + pyruvate. The catalysed reaction is 2-dehydro-3-deoxy-D-glucarate = 2-hydroxy-3-oxopropanoate + pyruvate. It participates in carbohydrate acid metabolism; galactarate degradation; D-glycerate from galactarate: step 2/3. Functionally, catalyzes the reversible retro-aldol cleavage of both 5-keto-4-deoxy-D-glucarate and 2-keto-3-deoxy-D-glucarate to pyruvate and tartronic semialdehyde. This chain is 5-keto-4-deoxy-D-glucarate aldolase, found in Shigella sonnei (strain Ss046).